The chain runs to 528 residues: ATP synthase subunit alpha 1 (528 aa).

An ATP-binding site is contributed by Gly-177–Thr-184.

The protein belongs to the ATPase alpha/beta chains family. As to quaternary structure, F-type ATPases have 2 components, CF(1) - the catalytic core - and CF(0) - the membrane proton channel. CF(1) has five subunits: alpha(3), beta(3), gamma(1), delta(1), epsilon(1). CF(0) has three main subunits: a(1), b(2) and c(9-12). The alpha and beta chains form an alternating ring which encloses part of the gamma chain. CF(1) is attached to CF(0) by a central stalk formed by the gamma and epsilon chains, while a peripheral stalk is formed by the delta and b chains.

It localises to the cell inner membrane. The catalysed reaction is ATP + H2O + 4 H(+)(in) = ADP + phosphate + 5 H(+)(out). Produces ATP from ADP in the presence of a proton gradient across the membrane. The alpha chain is a regulatory subunit. The polypeptide is ATP synthase subunit alpha 1 (Pseudoalteromonas atlantica (strain T6c / ATCC BAA-1087)).